We begin with the raw amino-acid sequence, 134 residues long: Small ribosomal subunit protein uS11 (134 aa).

The protein belongs to the universal ribosomal protein uS11 family. Part of the 30S ribosomal subunit. Interacts with proteins S7 and S18. Binds to IF-3.

In terms of biological role, located on the platform of the 30S subunit, it bridges several disparate RNA helices of the 16S rRNA. Forms part of the Shine-Dalgarno cleft in the 70S ribosome. This chain is Small ribosomal subunit protein uS11, found in Paraburkholderia xenovorans (strain LB400).